Here is a 240-residue protein sequence, read N- to C-terminus: Tetrahydromethanopterin S-methyltransferase subunit A (240 aa).

The Cytoplasmic segment spans residues M1 to K218. A 5-hydroxybenzimidazolylcob(I)amide-binding site is contributed by H85. Residues V219–G239 form a helical membrane-spanning segment. A topological domain (extracellular) is located at residue R240.

This sequence belongs to the MtrA family. In terms of assembly, the complex is composed of 8 subunits; MtrA, MtrB, MtrC, MtrD, MtrE, MtrF, MtrG and MtrH. 5-hydroxybenzimidazolylcob(I)amide is required as a cofactor.

It is found in the cell membrane. It carries out the reaction 5-methyl-5,6,7,8-tetrahydromethanopterin + coenzyme M + 2 Na(+)(in) = 5,6,7,8-tetrahydromethanopterin + methyl-coenzyme M + 2 Na(+)(out). It participates in one-carbon metabolism; methanogenesis from CO(2); methyl-coenzyme M from 5,10-methylene-5,6,7,8-tetrahydromethanopterin: step 2/2. Functionally, part of a complex that catalyzes the formation of methyl-coenzyme M and tetrahydromethanopterin from coenzyme M and methyl-tetrahydromethanopterin. This is an energy-conserving, sodium-ion translocating step. This chain is Tetrahydromethanopterin S-methyltransferase subunit A, found in Methanosarcina mazei (strain ATCC BAA-159 / DSM 3647 / Goe1 / Go1 / JCM 11833 / OCM 88) (Methanosarcina frisia).